The following is a 103-amino-acid chain: Large ribosomal subunit protein bL21 (103 aa).

The protein belongs to the bacterial ribosomal protein bL21 family. In terms of assembly, part of the 50S ribosomal subunit. Contacts protein L20.

In terms of biological role, this protein binds to 23S rRNA in the presence of protein L20. The chain is Large ribosomal subunit protein bL21 from Colwellia psychrerythraea (strain 34H / ATCC BAA-681) (Vibrio psychroerythus).